The chain runs to 330 residues: D-lactate dehydrogenase (330 aa).

NAD(+)-binding positions include 155-156, D175, 206-207, N212, 233-235, and D259; these read RI, MP, and MAR. Residue R235 is part of the active site. Residue E264 is part of the active site. H296 acts as the Proton donor in catalysis.

This sequence belongs to the D-isomer specific 2-hydroxyacid dehydrogenase family.

The catalysed reaction is (R)-lactate + NAD(+) = pyruvate + NADH + H(+). This chain is D-lactate dehydrogenase (ldhD), found in Streptococcus agalactiae serotype III (strain NEM316).